The chain runs to 120 residues: Ribosome-binding factor A (120 aa).

The protein belongs to the RbfA family. In terms of assembly, monomer. Binds 30S ribosomal subunits, but not 50S ribosomal subunits or 70S ribosomes.

It is found in the cytoplasm. In terms of biological role, one of several proteins that assist in the late maturation steps of the functional core of the 30S ribosomal subunit. Associates with free 30S ribosomal subunits (but not with 30S subunits that are part of 70S ribosomes or polysomes). Required for efficient processing of 16S rRNA. May interact with the 5'-terminal helix region of 16S rRNA. The chain is Ribosome-binding factor A from Chlorobaculum tepidum (strain ATCC 49652 / DSM 12025 / NBRC 103806 / TLS) (Chlorobium tepidum).